The following is a 656-amino-acid chain: DNA mismatch repair protein MutL (656 aa).

Belongs to the DNA mismatch repair MutL/HexB family.

In terms of biological role, this protein is involved in the repair of mismatches in DNA. It is required for dam-dependent methyl-directed DNA mismatch repair. May act as a 'molecular matchmaker', a protein that promotes the formation of a stable complex between two or more DNA-binding proteins in an ATP-dependent manner without itself being part of a final effector complex. This is DNA mismatch repair protein MutL from Lactococcus lactis subsp. lactis (strain IL1403) (Streptococcus lactis).